We begin with the raw amino-acid sequence, 618 residues long: Serine/threonine-protein kinase pkn1 (618 aa).

In terms of domain architecture, Protein kinase spans 15 to 381; that stretch reads YKILCYLRKG…KEEVKPQPLF (367 aa). Residues 21–29 and K44 contribute to the ATP site; that span reads LRKGLWCQD.

This sequence belongs to the protein kinase superfamily. Ser/Thr protein kinase family. Autophosphorylated on serine and threonine residues.

It catalyses the reaction L-seryl-[protein] + ATP = O-phospho-L-seryl-[protein] + ADP + H(+). The catalysed reaction is L-threonyl-[protein] + ATP = O-phospho-L-threonyl-[protein] + ADP + H(+). Together with the serine/threonine kinase PknD, may play a role in the specific interactions with host proteins during intracellular growth. This chain is Serine/threonine-protein kinase pkn1 (pkn1), found in Chlamydia caviae (strain ATCC VR-813 / DSM 19441 / 03DC25 / GPIC) (Chlamydophila caviae).